We begin with the raw amino-acid sequence, 366 residues long: Alanine racemase (366 aa).

Lysine 40 functions as the Proton acceptor; specific for D-alanine in the catalytic mechanism. The residue at position 40 (lysine 40) is an N6-(pyridoxal phosphate)lysine. Substrate is bound at residue arginine 136. Catalysis depends on tyrosine 263, which acts as the Proton acceptor; specific for L-alanine. Methionine 310 provides a ligand contact to substrate.

Belongs to the alanine racemase family. The cofactor is pyridoxal 5'-phosphate.

It catalyses the reaction L-alanine = D-alanine. Its pathway is amino-acid biosynthesis; D-alanine biosynthesis; D-alanine from L-alanine: step 1/1. Its function is as follows. Catalyzes the interconversion of L-alanine and D-alanine. May also act on other amino acids. This Streptococcus pyogenes serotype M12 (strain MGAS2096) protein is Alanine racemase (alr).